The primary structure comprises 542 residues: GPI alpha-1,2-mannosyltransferase 3 (542 aa).

Positions 1 to 36 (MESQAADYNPASRNLHGSSGEMKLRRRKSRQYVSAQ) are disordered. 8 helical membrane-spanning segments follow: residues 52–72 (LVLF…TSFV), 125–145 (VQFL…VADI), 213–233 (LVAL…PLLF), 244–264 (HLTL…SLII), 304–324 (GFPV…FLAP), 327–347 (LHIL…LGHK), 351–371 (FIYP…AHLK), and 376–396 (AALS…GLVH). Residue N480 is glycosylated (N-linked (GlcNAc...) asparagine).

The protein belongs to the glycosyltransferase 22 family. PIGB subfamily.

Its subcellular location is the endoplasmic reticulum membrane. Its pathway is glycolipid biosynthesis; glycosylphosphatidylinositol-anchor biosynthesis. In terms of biological role, alpha-1,2-mannosyltransferase that catalyzes the transfer of the third mannose, via an alpha-1,2 bond, from a dolichol-phosphate-mannose (Dol-P-Man) to an alpha-D-Man-(1-&gt;6)-2-PEtn-alpha-D-Man-(1-&gt;4)-alpha-D-GlcN-(1-&gt;6)-(1-radyl,2-acyl-sn-glycero-3-phospho)-2-acyl-inositol intermediate to generate an alpha-D-Man-(1-&gt;2)-alpha-D-Man-(1-&gt;6)-2-PEtn-alpha-D-Man-(1-&gt;4)-alpha-D-GlcN-(1-&gt;6)-(1-radyl,2-acyl-sn-glycero-3-phospho)-2-acyl-inositol (also termed H6) and participates in the nineth step of the glycosylphosphatidylinositol-anchor biosynthesis. May also add the third mannose to an alpha-D-Man-(1-&gt;6)-alpha-D-Man-(1-&gt;4)-alpha-D-GlcN-(1-&gt;6)-(1-radyl,2-acyl-sn-glycero-3-phospho)-2-acyl-inositol (also termed H3) intermediate generating an alpha-D-Man-(1-&gt;2)-alpha-D-Man-(1-&gt;6)-alpha-D-Man-(1-&gt;4)-alpha-D-GlcN-(1-&gt;6)-(1-radyl,2-acyl-sn-glycero-3-phospho)-2-acyl-inositol (also termed H4). In Mus musculus (Mouse), this protein is GPI alpha-1,2-mannosyltransferase 3.